Here is a 589-residue protein sequence, read N- to C-terminus: MPTISCDKEELYKALGREYTTQEFDELCFQFGIELDEDTTNDPERSPSERPSLKIDIPANRYDMLCLEGIAQALNVFNRRMATPQYKLLPSTTSLTISPETSEIRPYAAAAILRGVKLDPIRYQSFIALQDKLHANLCRNRTLVAIGTHDFSVMEGPFTYEALKPEEINFVPLNQTQEINGSNLLEFYKDSKHLSRYLHIIANSPRYPVILDAKRRVCSLPPIINSEFSKISVDTRDIFIDVTATDKTKLEIVVNMMTTMFSCYCEEPFTIEPVNIISEHNGCTRVTPNLNPTCFKADIDYLNEACGLSLPEDEICHLLTRMMLTAKPNPNDSKTLLVYVPPLRADILHQCDIMEDLGIAYGYDNLKHTYPAHSVTFGKPFEVNRLADIIRNEVAYAGWSEVMPFILCSHDENYAWLRKTDDSKAVQLANPKTLEFQVVRSSLLPGILKTVRENKNHALPIKIFEVSDVAFCDYSRERMTRNERHLCAIFAGLNSGFEQIHGLLDRVMLMLNTKRIMNPKDSDAVGYWIEAEDDSTFFPGRCAAVYYRKDFGTAGIRVGVFGVLHPLVLEKFELTSAASAVEIDLTLWV.

Positions 290–368 (LNPTCFKADI…IAYGYDNLKH (79 aa)) constitute a B5 domain. Mg(2+) is bound by residues aspartate 346, aspartate 352, glutamate 355, and aspartate 356.

This sequence belongs to the phenylalanyl-tRNA synthetase beta subunit family. Type 2 subfamily. As to quaternary structure, tetramer of two alpha and two beta subunits. Mg(2+) is required as a cofactor.

It localises to the cytoplasm. Its subcellular location is the nucleus. The catalysed reaction is tRNA(Phe) + L-phenylalanine + ATP = L-phenylalanyl-tRNA(Phe) + AMP + diphosphate + H(+). The protein is Phenylalanine--tRNA ligase beta subunit (frs1) of Schizosaccharomyces pombe (strain 972 / ATCC 24843) (Fission yeast).